We begin with the raw amino-acid sequence, 203 residues long: Ras-related protein RABD2a (203 aa).

GTP is bound by residues 15–23 (GDSGVGKSC), 33–40 (YVESYIST), 63–67 (DTAGQ), 121–124 (NKSD), and 151–153 (SAK). Positions 37–45 (YISTIGVDF) match the Effector region motif. Residues 176-203 (QPAGNNARPPTVQIRGQPVAQKNGCCST) form a disordered region. S-geranylgeranyl cysteine attachment occurs at residues Cys200 and Cys201.

The protein belongs to the small GTPase superfamily. Rab family. In terms of assembly, does not interact with GC5.

It localises to the golgi apparatus. It is found in the trans-Golgi network membrane. The protein localises to the golgi apparatus membrane. Protein transport. Regulator of membrane traffic from the Golgi apparatus towards the endoplasmic reticulum (ER). The protein is Ras-related protein RABD2a (RABD2A) of Arabidopsis thaliana (Mouse-ear cress).